The sequence spans 381 residues: Selenoprotein P (381 aa).

The first 19 residues, 1–19 (MWRSLGLALALCLLPLGGT), serve as a signal peptide directing secretion. A glycan (N-linked (GlcNAc...) asparagine) is linked at N46. Position 59 (U59) is a non-standard amino acid, selenocysteine. N-linked (GlcNAc...) asparagine glycans are attached at residues N83, N119, and N128. The tract at residues 202 to 268 (SPHYHHEHHH…ENRDMPGSED (67 aa)) is disordered. Residues 204–217 (HYHHEHHHNHRHQH) are compositionally biased toward basic residues. Residues 218 to 229 (LGSSELSENQQP) are compositionally biased toward polar residues. The span at 243–255 (LHHHHKHKGQHRQ) shows a compositional bias: basic residues. Residue S266 is modified to Phosphoserine. Non-standard amino acids (selenocysteine) are located at U318 and U330. The N-linked (GlcNAc...) asparagine glycan is linked to N338. Non-standard amino acids (selenocysteine) are located at U345, U352, U367, U369, U376, and U378. The segment at 352-381 (UQISQQLIPTEASTSURUKNQAKKUEUPSN) is disordered. The span at 353 to 369 (QISQQLIPTEASTSURU) shows a compositional bias: polar residues.

Belongs to the selenoprotein P family. Phosphorylation sites are present in the extracellular medium.

It localises to the secreted. Functionally, might be responsible for some of the extracellular antioxidant defense properties of selenium or might be involved in the transport of selenium. May supply selenium to tissues such as brain and testis. The chain is Selenoprotein P from Pongo abelii (Sumatran orangutan).